We begin with the raw amino-acid sequence, 349 residues long: tRNA pseudouridine synthase D (349 aa).

A substrate-binding site is contributed by Phe27. Residue Asp80 is the Nucleophile of the active site. Asn129 is a binding site for substrate. The TRUD domain maps to 155–303; the sequence is GVPNYFGAQR…VEAARRAMLL (149 aa). Phe329 contacts substrate.

The protein belongs to the pseudouridine synthase TruD family.

The enzyme catalyses uridine(13) in tRNA = pseudouridine(13) in tRNA. In terms of biological role, responsible for synthesis of pseudouridine from uracil-13 in transfer RNAs. This Escherichia coli O81 (strain ED1a) protein is tRNA pseudouridine synthase D.